The chain runs to 109 residues: uncharacterized protein (109 aa).

It to E.coli YtfG C-terminal region.

This is an uncharacterized protein from Haemophilus influenzae (strain ATCC 51907 / DSM 11121 / KW20 / Rd).